A 428-amino-acid chain; its full sequence is MSVVGTPKSAEQIQQEWDTNPRWKDVTRTYSAEDVVALQGSVVEEHTLARRGAEVLWEQLHDLEWVNALGALTGNMAVQQVRAGLKAIYLSGWQVAGDANLSGHTYPDQSLYPANSVPQVVRRINNALQRADQIAKIEGDTSVENWLAPIVADGEAGFGGALNVYELQKALIAAGVAGSHWEDQLASEKKCGHLGGKVLIPTQQHIRTLTSARLAADVADVPTVVIARTDAEAATLITSDVDERDQPFITGERTREGFYRTKNGIEPCIARAKAYAPFADLIWMETGTPDLEAARQFSEAVKAEYPDQMLAYNCSPSFNWKKHLDDATIAKFQKELAAMGFKFQFITLAGFHALNYSMFDLAYGYAQNQMSAYVELQEREFAAEERGYTATKHQREVGAGYFDRIATTVDPNSSTTALTGSTEEGQFH.

S91–W93 is a binding site for substrate. Position 153 (D153) interacts with Mg(2+). C191 functions as the Proton acceptor in the catalytic mechanism. Substrate contacts are provided by residues G192 to H193, R228, N313 to S317, and T347.

The protein belongs to the isocitrate lyase/PEP mutase superfamily. Isocitrate lyase family. As to quaternary structure, homotetramer. Requires Mg(2+) as cofactor.

It catalyses the reaction D-threo-isocitrate = glyoxylate + succinate. It carries out the reaction (2S,3R)-3-hydroxybutane-1,2,3-tricarboxylate = pyruvate + succinate. Its pathway is carbohydrate metabolism; glyoxylate cycle; (S)-malate from isocitrate: step 1/2. Functionally, involved in the persistence and virulence of M.tuberculosis. Catalyzes the reversible formation of succinate and glyoxylate from isocitrate, a key step of the glyoxylate cycle, which operates as an anaplerotic route for replenishing the tricarboxylic acid cycle during growth on fatty acid substrates. It also catalyzes the formation of pyruvate and succinate from 2-methylisocitrate, a key step in the methylcitrate cycle (propionate degradation route). In Mycobacterium tuberculosis (strain ATCC 35801 / TMC 107 / Erdman), this protein is Isocitrate lyase 1 (icl1).